Consider the following 164-residue polypeptide: Protein-export protein SecB (164 aa).

This sequence belongs to the SecB family. Homotetramer, a dimer of dimers. One homotetramer interacts with 1 SecA dimer.

Its subcellular location is the cytoplasm. In terms of biological role, one of the proteins required for the normal export of preproteins out of the cell cytoplasm. It is a molecular chaperone that binds to a subset of precursor proteins, maintaining them in a translocation-competent state. It also specifically binds to its receptor SecA. The chain is Protein-export protein SecB from Zymomonas mobilis subsp. mobilis (strain ATCC 31821 / ZM4 / CP4).